The primary structure comprises 101 residues: MRFNIYFSLHTYMYIHIYIYICMYTYVYKYMNTVMTTLAKCVGIMTACIQEPVPACQQNRLALRQIPRRHPPSRDHHLLLRLRPRPLLLRPPRTRIPRLRR.

This is an uncharacterized protein from Saccharomyces cerevisiae (strain ATCC 204508 / S288c) (Baker's yeast).